We begin with the raw amino-acid sequence, 374 residues long: Glutamate 5-kinase (374 aa).

Lys16 contacts ATP. The substrate site is built by Ser56, Asp143, and Asn155. 175-176 provides a ligand contact to ATP; sequence TD. The 79-residue stretch at 282–360 folds into the PUA domain; that stretch reads RGRVVLDAGA…SEIEAVLGYV (79 aa).

It belongs to the glutamate 5-kinase family.

Its subcellular location is the cytoplasm. It carries out the reaction L-glutamate + ATP = L-glutamyl 5-phosphate + ADP. It participates in amino-acid biosynthesis; L-proline biosynthesis; L-glutamate 5-semialdehyde from L-glutamate: step 1/2. Its function is as follows. Catalyzes the transfer of a phosphate group to glutamate to form L-glutamate 5-phosphate. This chain is Glutamate 5-kinase, found in Ralstonia nicotianae (strain ATCC BAA-1114 / GMI1000) (Ralstonia solanacearum).